Reading from the N-terminus, the 708-residue chain is Fatty acid oxidation complex subunit alpha (708 aa).

An enoyl-CoA hydratase region spans residues 1–190 (MSQDKAFTME…KAGLVTEVVP (190 aa)). The interval 310–708 (DSVKRVGVLG…MLENGWNFYQ (399 aa)) is 3-hydroxyacyl-CoA dehydrogenase.

It in the N-terminal section; belongs to the enoyl-CoA hydratase/isomerase family. The protein in the central section; belongs to the 3-hydroxyacyl-CoA dehydrogenase family. Heterotetramer of two alpha chains (FadJ) and two beta chains (FadI).

The protein localises to the cytoplasm. It carries out the reaction a (3S)-3-hydroxyacyl-CoA = a (2E)-enoyl-CoA + H2O. It catalyses the reaction a 4-saturated-(3S)-3-hydroxyacyl-CoA = a (3E)-enoyl-CoA + H2O. The enzyme catalyses a (3S)-3-hydroxyacyl-CoA + NAD(+) = a 3-oxoacyl-CoA + NADH + H(+). The catalysed reaction is (3S)-3-hydroxybutanoyl-CoA = (3R)-3-hydroxybutanoyl-CoA. It functions in the pathway lipid metabolism; fatty acid beta-oxidation. Catalyzes the formation of a hydroxyacyl-CoA by addition of water on enoyl-CoA. Also exhibits 3-hydroxyacyl-CoA epimerase and 3-hydroxyacyl-CoA dehydrogenase activities. This chain is Fatty acid oxidation complex subunit alpha, found in Idiomarina loihiensis (strain ATCC BAA-735 / DSM 15497 / L2-TR).